The primary structure comprises 295 residues: 4-hydroxy-tetrahydrodipicolinate synthase (295 aa).

Thr48 lines the pyruvate pocket. Tyr135 functions as the Proton donor/acceptor in the catalytic mechanism. Lys163 functions as the Schiff-base intermediate with substrate in the catalytic mechanism. Residue Val204 coordinates pyruvate.

This sequence belongs to the DapA family. As to quaternary structure, homotetramer; dimer of dimers.

The protein resides in the cytoplasm. It catalyses the reaction L-aspartate 4-semialdehyde + pyruvate = (2S,4S)-4-hydroxy-2,3,4,5-tetrahydrodipicolinate + H2O + H(+). It participates in amino-acid biosynthesis; L-lysine biosynthesis via DAP pathway; (S)-tetrahydrodipicolinate from L-aspartate: step 3/4. Functionally, catalyzes the condensation of (S)-aspartate-beta-semialdehyde [(S)-ASA] and pyruvate to 4-hydroxy-tetrahydrodipicolinate (HTPA). This is 4-hydroxy-tetrahydrodipicolinate synthase from Francisella tularensis subsp. novicida (strain U112).